Here is a 156-residue protein sequence, read N- to C-terminus: Ribosome maturation factor RimP (156 aa).

The protein belongs to the RimP family.

It localises to the cytoplasm. Required for maturation of 30S ribosomal subunits. In Treponema pallidum (strain Nichols), this protein is Ribosome maturation factor RimP.